The chain runs to 491 residues: 3-octaprenyl-4-hydroxybenzoate carboxy-lyase (491 aa).

N172 lines the Mn(2+) pocket. Residues 175–177 (IYR), 189–191 (RWL), and 194–195 (RG) contribute to the prenylated FMN site. Mn(2+) is bound at residue E238. Residue D287 is the Proton donor of the active site.

Belongs to the UbiD family. In terms of assembly, homohexamer. It depends on prenylated FMN as a cofactor. The cofactor is Mn(2+).

The protein resides in the cell membrane. It catalyses the reaction a 4-hydroxy-3-(all-trans-polyprenyl)benzoate + H(+) = a 2-(all-trans-polyprenyl)phenol + CO2. Its pathway is cofactor biosynthesis; ubiquinone biosynthesis. Catalyzes the decarboxylation of 3-octaprenyl-4-hydroxy benzoate to 2-octaprenylphenol, an intermediate step in ubiquinone biosynthesis. The polypeptide is 3-octaprenyl-4-hydroxybenzoate carboxy-lyase (Histophilus somni (strain 2336) (Haemophilus somnus)).